A 463-amino-acid polypeptide reads, in one-letter code: ATP synthase subunit beta (463 aa).

151-158 (GGAGVGKT) lines the ATP pocket.

This sequence belongs to the ATPase alpha/beta chains family. F-type ATPases have 2 components, CF(1) - the catalytic core - and CF(0) - the membrane proton channel. CF(1) has five subunits: alpha(3), beta(3), gamma(1), delta(1), epsilon(1). CF(0) has three main subunits: a(1), b(2) and c(9-12). The alpha and beta chains form an alternating ring which encloses part of the gamma chain. CF(1) is attached to CF(0) by a central stalk formed by the gamma and epsilon chains, while a peripheral stalk is formed by the delta and b chains.

The protein resides in the cell membrane. The catalysed reaction is ATP + H2O + 4 H(+)(in) = ADP + phosphate + 5 H(+)(out). In terms of biological role, produces ATP from ADP in the presence of a proton gradient across the membrane. The catalytic sites are hosted primarily by the beta subunits. This chain is ATP synthase subunit beta, found in Clostridium botulinum (strain ATCC 19397 / Type A).